The sequence spans 119 residues: Holo-[acyl-carrier-protein] synthase (119 aa).

Mg(2+) contacts are provided by aspartate 8 and glutamate 58.

The protein belongs to the P-Pant transferase superfamily. AcpS family. Mg(2+) serves as cofactor.

It localises to the cytoplasm. It carries out the reaction apo-[ACP] + CoA = holo-[ACP] + adenosine 3',5'-bisphosphate + H(+). Its function is as follows. Transfers the 4'-phosphopantetheine moiety from coenzyme A to a Ser of acyl-carrier-protein. This chain is Holo-[acyl-carrier-protein] synthase, found in Geobacillus sp. (strain WCH70).